The primary structure comprises 214 residues: Probable GTP-binding protein EngB (214 aa).

In terms of domain architecture, EngB-type G spans histidine 22–proline 194. Residues glycine 30–serine 37, glycine 57–leucine 61, aspartate 75–glycine 78, threonine 142–aspartate 145, and phenylalanine 173–alanine 175 contribute to the GTP site. 2 residues coordinate Mg(2+): serine 37 and threonine 59. The disordered stretch occupies residues threonine 195 to aspartate 214. Residues proline 203–aspartate 214 are compositionally biased toward pro residues.

The protein belongs to the TRAFAC class TrmE-Era-EngA-EngB-Septin-like GTPase superfamily. EngB GTPase family. Requires Mg(2+) as cofactor.

Necessary for normal cell division and for the maintenance of normal septation. In Geobacter sp. (strain M21), this protein is Probable GTP-binding protein EngB.